We begin with the raw amino-acid sequence, 327 residues long: MSQLTEIVEQALAAIEGTDDLKALDEIRVDYLGKKGKITDMMKMMGKLSPAEKPAFGQAVNQAKQAVQKHLSERVEGLKAAELQATLAAESIDVTLPGRRIDNGGLHPVTRTIERIETFFGELGFSVKEGPEIEDDFHNFDALNISEHHPARADHDTFYFNPKVMLRTQTSGVQIRTMENEKPPLRIISPGRVYRNDYDQTHTPMFHQVEGLLVAENVNFAELKGILHDFLRNFFEEDLQVRFRPSYFPFTEPSAEVDVMGKNGKWLEVLGCGMVHPNVLRSVGIDPEKYSGFAFGMGVERLSMLRYGVNDLRSFFENDLRFLKQFK.

A Mg(2+)-binding site is contributed by Glu252.

The protein belongs to the class-II aminoacyl-tRNA synthetase family. Phe-tRNA synthetase alpha subunit type 1 subfamily. In terms of assembly, tetramer of two alpha and two beta subunits. Mg(2+) serves as cofactor.

The protein resides in the cytoplasm. It catalyses the reaction tRNA(Phe) + L-phenylalanine + ATP = L-phenylalanyl-tRNA(Phe) + AMP + diphosphate + H(+). This is Phenylalanine--tRNA ligase alpha subunit from Shewanella woodyi (strain ATCC 51908 / MS32).